A 356-amino-acid polypeptide reads, in one-letter code: Phospho-N-acetylmuramoyl-pentapeptide-transferase (356 aa).

The next 10 membrane-spanning stretches (helical) occupy residues 25-45 (TVAA…SIIS), 70-90 (GTPT…ALLW), 93-113 (LFNI…AIGF), 138-158 (FLVA…GLAL), 164-184 (YFIN…VGLG), 195-215 (GLAI…AYLS), 232-252 (VGEL…FLWF), 258-278 (AIFM…IVSV), 284-304 (IVLI…IIQV), and 333-353 (QIVV…LSTL).

Belongs to the glycosyltransferase 4 family. MraY subfamily. Requires Mg(2+) as cofactor.

It localises to the cell inner membrane. It catalyses the reaction UDP-N-acetyl-alpha-D-muramoyl-L-alanyl-gamma-D-glutamyl-meso-2,6-diaminopimeloyl-D-alanyl-D-alanine + di-trans,octa-cis-undecaprenyl phosphate = di-trans,octa-cis-undecaprenyl diphospho-N-acetyl-alpha-D-muramoyl-L-alanyl-D-glutamyl-meso-2,6-diaminopimeloyl-D-alanyl-D-alanine + UMP. The protein operates within cell wall biogenesis; peptidoglycan biosynthesis. Catalyzes the initial step of the lipid cycle reactions in the biosynthesis of the cell wall peptidoglycan: transfers peptidoglycan precursor phospho-MurNAc-pentapeptide from UDP-MurNAc-pentapeptide onto the lipid carrier undecaprenyl phosphate, yielding undecaprenyl-pyrophosphoryl-MurNAc-pentapeptide, known as lipid I. This chain is Phospho-N-acetylmuramoyl-pentapeptide-transferase, found in Bartonella bacilliformis (strain ATCC 35685 / KC583 / Herrer 020/F12,63).